A 494-amino-acid chain; its full sequence is Alpha-amylase-related protein (494 aa).

Residues 1-20 form the signal peptide; sequence MIKFALALTLCLAGASLSLA. The residue at position 21 (glutamine 21) is a Pyrrolidone carboxylic acid. Residues cysteine 48 and cysteine 104 are joined by a disulfide bond. Residues asparagine 118, glutamine 169, and aspartate 178 each coordinate Ca(2+). An intrachain disulfide couples cysteine 157 to cysteine 171. Arginine 206 provides a ligand contact to chloride. The active-site Nucleophile is aspartate 208. Histidine 212 provides a ligand contact to Ca(2+). Catalysis depends on glutamate 245, which acts as the Proton donor. Residues asparagine 308 and arginine 343 each coordinate chloride. Intrachain disulfides connect cysteine 376/cysteine 382, cysteine 418/cysteine 441, and cysteine 448/cysteine 460.

The protein belongs to the glycosyl hydrolase 13 family. As to quaternary structure, monomer. The cofactor is Ca(2+). Chloride serves as cofactor.

The protein localises to the secreted. It carries out the reaction Endohydrolysis of (1-&gt;4)-alpha-D-glucosidic linkages in polysaccharides containing three or more (1-&gt;4)-alpha-linked D-glucose units.. This is Alpha-amylase-related protein (Amyrel) from Drosophila auraria (Fruit fly).